Here is a 248-residue protein sequence, read N- to C-terminus: Probable transcriptional regulatory protein Fphi_1565 (248 aa).

It belongs to the TACO1 family.

The protein localises to the cytoplasm. The sequence is that of Probable transcriptional regulatory protein Fphi_1565 from Francisella philomiragia subsp. philomiragia (strain ATCC 25017 / CCUG 19701 / FSC 153 / O#319-036).